The following is a 714-amino-acid chain: Methylmalonyl-CoA mutase (714 aa).

The B12-binding domain maps to 584-714; it reads RPRILIAKMG…VLNLISQHHD (131 aa). An adenosylcob(III)alamin-binding site is contributed by H597.

It belongs to the methylmalonyl-CoA mutase family. In terms of assembly, homodimer. Interacts with ArgK. Adenosylcob(III)alamin is required as a cofactor.

The enzyme catalyses (R)-methylmalonyl-CoA = succinyl-CoA. Its function is as follows. Catalyzes the interconversion of succinyl-CoA and methylmalonyl-CoA. Could be part of a pathway that converts succinate to propionate. This Escherichia coli (strain K12) protein is Methylmalonyl-CoA mutase (scpA).